We begin with the raw amino-acid sequence, 316 residues long: Ribosomal RNA small subunit methyltransferase H (316 aa).

S-adenosyl-L-methionine-binding positions include 35 to 37 (GGH), D55, F79, D101, and Q108.

This sequence belongs to the methyltransferase superfamily. RsmH family.

It is found in the cytoplasm. The catalysed reaction is cytidine(1402) in 16S rRNA + S-adenosyl-L-methionine = N(4)-methylcytidine(1402) in 16S rRNA + S-adenosyl-L-homocysteine + H(+). Functionally, specifically methylates the N4 position of cytidine in position 1402 (C1402) of 16S rRNA. This Aliivibrio salmonicida (strain LFI1238) (Vibrio salmonicida (strain LFI1238)) protein is Ribosomal RNA small subunit methyltransferase H.